The primary structure comprises 51 residues: MGNAPSRTEPTCDNSINFIIPKENKSYQCYPEQVESNPIDSINSVYFYKTT.

This is an uncharacterized protein from Dictyostelium discoideum (Social amoeba).